Consider the following 490-residue polypeptide: Katanin p60 ATPase-containing subunit A-like 1 (490 aa).

An N-acetylmethionine modification is found at Met1. Positions 96–182 (PAVWPPPVPA…ASDGEIPKFD (87 aa)) are disordered. Positions 116–127 (PNREVRPLRKEM) are enriched in basic and acidic residues. Residues 128-139 (AGVGARGPVGRA) show a composition bias toward low complexity. The span at 143–169 (SKSEKPSASRDKDCRARGRDDKGRKNM) shows a compositional bias: basic and acidic residues. Ser174 is subject to Phosphoserine. An ATP-binding site is contributed by 248–255 (GPPGTGKT).

The protein belongs to the AAA ATPase family. Katanin p60 subunit A1 subfamily. A-like 1 sub-subfamily. Interacts with KATNB1 and KATNBL1.

The protein localises to the cytoplasm. Its subcellular location is the cytoskeleton. It localises to the spindle pole. The protein resides in the spindle. The enzyme catalyses n ATP + n H2O + a microtubule = n ADP + n phosphate + (n+1) alpha/beta tubulin heterodimers.. Regulates microtubule dynamics in Sertoli cells, a process that is essential for spermiogenesis and male fertility. Severs microtubules in an ATP-dependent manner, promoting rapid reorganization of cellular microtubule arrays. Has microtubule-severing activity in vitro. The protein is Katanin p60 ATPase-containing subunit A-like 1 of Oryctolagus cuniculus (Rabbit).